The chain runs to 172 residues: Probable chorismate pyruvate-lyase (172 aa).

Positions 37, 79, 117, and 158 each coordinate substrate.

The protein belongs to the UbiC family.

Its subcellular location is the cytoplasm. The catalysed reaction is chorismate = 4-hydroxybenzoate + pyruvate. The protein operates within cofactor biosynthesis; ubiquinone biosynthesis. Its function is as follows. Removes the pyruvyl group from chorismate, with concomitant aromatization of the ring, to provide 4-hydroxybenzoate (4HB) for the ubiquinone pathway. The protein is Probable chorismate pyruvate-lyase of Bartonella quintana (strain Toulouse) (Rochalimaea quintana).